Consider the following 189-residue polypeptide: Glycerol-3-phosphate acyltransferase (189 aa).

Helical transmembrane passes span 1–21 (MVWL…AILL), 79–99 (QQAW…YFNF), 113–133 (LGLY…VFAF), and 151–171 (LLAW…GVIV).

This sequence belongs to the PlsY family. In terms of assembly, probably interacts with PlsX.

It is found in the cell inner membrane. It catalyses the reaction an acyl phosphate + sn-glycerol 3-phosphate = a 1-acyl-sn-glycero-3-phosphate + phosphate. It participates in lipid metabolism; phospholipid metabolism. Catalyzes the transfer of an acyl group from acyl-phosphate (acyl-PO(4)) to glycerol-3-phosphate (G3P) to form lysophosphatidic acid (LPA). This enzyme utilizes acyl-phosphate as fatty acyl donor, but not acyl-CoA or acyl-ACP. This chain is Glycerol-3-phosphate acyltransferase, found in Azotobacter vinelandii (strain DJ / ATCC BAA-1303).